The following is a 79-amino-acid chain: Protein SIP18 (79 aa).

A disordered region spans residues 1-79; the sequence is MSNMMNKFAE…DWKTYENMKK (79 aa). Residues 8–20 show a composition bias toward basic and acidic residues; it reads FAEKLQGNDDSHQ.

The chain is Protein SIP18 (SIP18) from Saccharomyces cerevisiae (strain ATCC 204508 / S288c) (Baker's yeast).